Consider the following 70-residue polypeptide: Large ribosomal subunit protein bL31 (70 aa).

Zn(2+)-binding residues include C16, C18, C36, and C39.

It belongs to the bacterial ribosomal protein bL31 family. Type A subfamily. As to quaternary structure, part of the 50S ribosomal subunit. Requires Zn(2+) as cofactor.

Functionally, binds the 23S rRNA. In Tolumonas auensis (strain DSM 9187 / NBRC 110442 / TA 4), this protein is Large ribosomal subunit protein bL31.